The primary structure comprises 448 residues: C4-dicarboxylate transport protein (448 aa).

Transmembrane regions (helical) follow at residues 20–38, 53–75, 88–110, 161–178, 199–220, 230–252, 325–347, and 362–384; these read LYFQ…GHFY, IRLV…IAGM, AMIY…ANTV, ILQV…LGIV, LVAI…FTIG, LAML…LGAV, LFIA…LLVA, and FITL…ALIL.

This sequence belongs to the dicarboxylate/amino acid:cation symporter (DAACS) (TC 2.A.23) family.

It is found in the cell inner membrane. Functionally, responsible for the transport of dicarboxylates such as succinate, fumarate, and malate from the periplasm across the membrane. This chain is C4-dicarboxylate transport protein, found in Agrobacterium fabrum (strain C58 / ATCC 33970) (Agrobacterium tumefaciens (strain C58)).